The sequence spans 488 residues: DNA polymerase II small subunit (488 aa).

It belongs to the DNA polymerase delta/II small subunit family. In terms of assembly, heterodimer of a large subunit and a small subunit.

The catalysed reaction is DNA(n) + a 2'-deoxyribonucleoside 5'-triphosphate = DNA(n+1) + diphosphate. The enzyme catalyses Exonucleolytic cleavage in the 3'- to 5'-direction to yield nucleoside 5'-phosphates.. Possesses two activities: a DNA synthesis (polymerase) and an exonucleolytic activity that degrades single-stranded DNA in the 3' to 5' direction. Has a template-primer preference which is characteristic of a replicative DNA polymerase. The polypeptide is DNA polymerase II small subunit (polB) (Archaeoglobus fulgidus (strain ATCC 49558 / DSM 4304 / JCM 9628 / NBRC 100126 / VC-16)).